The primary structure comprises 321 residues: MLIVGAGPAGLYGAYYAGFRGMSVALMDSLPEAGGQVTAMYPEKVIYDIAGLPAVRGRELIDALLIQANQFSPTYLLGQQAAELAHKPDAVVVTSSQGLRVRAKVVVITGGLGTFAPRPLPTGTAHLGRGLVYFVPKLDVHTGQDVIVVGGGDSAFDWALALEPIARSVTLVHRRDRFRAHMSTVERVEASSVEILTFTEVAMVHGEEWIEKVELVQTRTGDRHVRPAQAVVAALGFTADLGPLTRWNLTIDKRHIVVDPTMATGVERIFAAGDITEYPGKVRLIATGFGEAATAVNNAAPLVDPSAKIFPGHSSDDGTGG.

7 residues coordinate FAD: aspartate 28, glutamine 36, tyrosine 41, alanine 81, phenylalanine 115, aspartate 274, and serine 315.

It belongs to the ferredoxin--NADP reductase type 2 family. In terms of assembly, homodimer. FAD serves as cofactor.

It catalyses the reaction 2 reduced [2Fe-2S]-[ferredoxin] + NADP(+) + H(+) = 2 oxidized [2Fe-2S]-[ferredoxin] + NADPH. This is Ferredoxin--NADP reductase from Frankia casuarinae (strain DSM 45818 / CECT 9043 / HFP020203 / CcI3).